We begin with the raw amino-acid sequence, 353 residues long: Photosystem II protein D1 (353 aa).

At Thr2 the chain carries N-acetylthreonine. Thr2 carries the phosphothreonine modification. Helical transmembrane passes span 29-46 (YIGW…TATS), 118-133 (HFFL…EWEL), and 142-156 (WIAV…AATA). A chlorophyll a-binding site is contributed by His118. Residue Tyr126 coordinates pheophytin a. The [CaMn4O5] cluster site is built by Asp170 and Glu189. The chain crosses the membrane as a helical span at residues 197 to 218 (FHMLGVAGVFGGSLFSAMHGSL). His198 contacts chlorophyll a. A quinone contacts are provided by residues His215 and 264-265 (SF). His215 serves as a coordination point for Fe cation. His272 is a Fe cation binding site. A helical membrane pass occupies residues 274 to 288 (FLAAWPVVGIWFTAL). Residues His332, Glu333, Asp342, and Ala344 each coordinate [CaMn4O5] cluster. The propeptide occupies 345-353 (SVEAPSVNG).

Belongs to the reaction center PufL/M/PsbA/D family. As to quaternary structure, PSII is composed of 1 copy each of membrane proteins PsbA, PsbB, PsbC, PsbD, PsbE, PsbF, PsbH, PsbI, PsbJ, PsbK, PsbL, PsbM, PsbT, PsbX, PsbY, PsbZ, Psb30/Ycf12, at least 3 peripheral proteins of the oxygen-evolving complex and a large number of cofactors. It forms dimeric complexes. Requires The D1/D2 heterodimer binds P680, chlorophylls that are the primary electron donor of PSII, and subsequent electron acceptors. It shares a non-heme iron and each subunit binds pheophytin, quinone, additional chlorophylls, carotenoids and lipids. D1 provides most of the ligands for the Mn4-Ca-O5 cluster of the oxygen-evolving complex (OEC). There is also a Cl(-1) ion associated with D1 and D2, which is required for oxygen evolution. The PSII complex binds additional chlorophylls, carotenoids and specific lipids. as cofactor. In terms of processing, tyr-161 forms a radical intermediate that is referred to as redox-active TyrZ, YZ or Y-Z. C-terminally processed by CTPA; processing is essential to allow assembly of the oxygen-evolving complex and thus photosynthetic growth.

Its subcellular location is the plastid. It localises to the chloroplast thylakoid membrane. It carries out the reaction 2 a plastoquinone + 4 hnu + 2 H2O = 2 a plastoquinol + O2. In terms of biological role, photosystem II (PSII) is a light-driven water:plastoquinone oxidoreductase that uses light energy to abstract electrons from H(2)O, generating O(2) and a proton gradient subsequently used for ATP formation. It consists of a core antenna complex that captures photons, and an electron transfer chain that converts photonic excitation into a charge separation. The D1/D2 (PsbA/PsbD) reaction center heterodimer binds P680, the primary electron donor of PSII as well as several subsequent electron acceptors. The sequence is that of Photosystem II protein D1 from Chaetosphaeridium globosum (Charophycean green alga).